The sequence spans 290 residues: Nucleoid occlusion protein (290 aa).

The H-T-H motif DNA-binding region spans 153–172; it reads EALAQRLGKGQSTIANKLRL.

The protein belongs to the ParB family.

It is found in the cytoplasm. Its subcellular location is the nucleoid. Functionally, effects nucleoid occlusion by binding relatively nonspecifically to DNA and preventing the assembly of the division machinery in the vicinity of the nucleoid, especially under conditions that disturb the cell cycle. It helps to coordinate cell division and chromosome segregation by preventing the formation of the Z ring through the nucleoid, which would cause chromosome breakage. This Bacillus cereus (strain AH187) protein is Nucleoid occlusion protein.